A 258-amino-acid chain; its full sequence is Pyridoxine 5'-phosphate synthase (258 aa).

A 3-amino-2-oxopropyl phosphate-binding site is contributed by N6. 8–9 (DH) is a 1-deoxy-D-xylulose 5-phosphate binding site. R17 provides a ligand contact to 3-amino-2-oxopropyl phosphate. The active-site Proton acceptor is the H42. Residues R44 and H49 each coordinate 1-deoxy-D-xylulose 5-phosphate. Catalysis depends on E69, which acts as the Proton acceptor. T99 is a binding site for 1-deoxy-D-xylulose 5-phosphate. H213 acts as the Proton donor in catalysis. Residues G214 and 235–236 (GQ) each bind 3-amino-2-oxopropyl phosphate.

This sequence belongs to the PNP synthase family. As to quaternary structure, homooctamer; tetramer of dimers.

Its subcellular location is the cytoplasm. It carries out the reaction 3-amino-2-oxopropyl phosphate + 1-deoxy-D-xylulose 5-phosphate = pyridoxine 5'-phosphate + phosphate + 2 H2O + H(+). It participates in cofactor biosynthesis; pyridoxine 5'-phosphate biosynthesis; pyridoxine 5'-phosphate from D-erythrose 4-phosphate: step 5/5. In terms of biological role, catalyzes the complicated ring closure reaction between the two acyclic compounds 1-deoxy-D-xylulose-5-phosphate (DXP) and 3-amino-2-oxopropyl phosphate (1-amino-acetone-3-phosphate or AAP) to form pyridoxine 5'-phosphate (PNP) and inorganic phosphate. In Sulfurovum sp. (strain NBC37-1), this protein is Pyridoxine 5'-phosphate synthase.